The sequence spans 317 residues: uncharacterized protein (317 aa).

Belongs to the asfivirus F317L family.

It localises to the virion. This is an uncharacterized protein from African swine fever virus (strain Badajoz 1971 Vero-adapted) (Ba71V).